We begin with the raw amino-acid sequence, 262 residues long: Polyamine aminopropyltransferase (262 aa).

Residues Met-1 to Pro-249 enclose the PABS domain. Asn-29 contacts S-methyl-5'-thioadenosine. Asp-83 contacts spermidine. The active-site Proton acceptor is Asp-155.

Belongs to the spermidine/spermine synthase family. In terms of assembly, homodimer or homotetramer.

The protein localises to the cytoplasm. The catalysed reaction is S-adenosyl 3-(methylsulfanyl)propylamine + putrescine = S-methyl-5'-thioadenosine + spermidine + H(+). The protein operates within amine and polyamine biosynthesis; spermidine biosynthesis; spermidine from putrescine: step 1/1. Catalyzes the irreversible transfer of a propylamine group from the amino donor S-adenosylmethioninamine (decarboxy-AdoMet) to putrescine (1,4-diaminobutane) to yield spermidine. This Helicobacter pylori (strain P12) protein is Polyamine aminopropyltransferase.